We begin with the raw amino-acid sequence, 322 residues long: Pantothenate kinase (322 aa).

100 to 107 (GSVAVGKS) provides a ligand contact to ATP.

Belongs to the prokaryotic pantothenate kinase family.

The protein resides in the cytoplasm. The enzyme catalyses (R)-pantothenate + ATP = (R)-4'-phosphopantothenate + ADP + H(+). The protein operates within cofactor biosynthesis; coenzyme A biosynthesis; CoA from (R)-pantothenate: step 1/5. The polypeptide is Pantothenate kinase (Brucella abortus (strain 2308)).